A 252-amino-acid chain; its full sequence is Imidazole glycerol phosphate synthase subunit HisF (252 aa).

Active-site residues include Asp-13 and Asp-132.

This sequence belongs to the HisA/HisF family. As to quaternary structure, heterodimer of HisH and HisF.

It is found in the cytoplasm. It carries out the reaction 5-[(5-phospho-1-deoxy-D-ribulos-1-ylimino)methylamino]-1-(5-phospho-beta-D-ribosyl)imidazole-4-carboxamide + L-glutamine = D-erythro-1-(imidazol-4-yl)glycerol 3-phosphate + 5-amino-1-(5-phospho-beta-D-ribosyl)imidazole-4-carboxamide + L-glutamate + H(+). It functions in the pathway amino-acid biosynthesis; L-histidine biosynthesis; L-histidine from 5-phospho-alpha-D-ribose 1-diphosphate: step 5/9. Its function is as follows. IGPS catalyzes the conversion of PRFAR and glutamine to IGP, AICAR and glutamate. The HisF subunit catalyzes the cyclization activity that produces IGP and AICAR from PRFAR using the ammonia provided by the HisH subunit. In Campylobacter fetus subsp. fetus (strain 82-40), this protein is Imidazole glycerol phosphate synthase subunit HisF.